A 203-amino-acid polypeptide reads, in one-letter code: Large ribosomal subunit protein uL13 (203 aa).

Position 2 is an N-acetylalanine (A2). R59 is subject to Citrulline. Residue S77 is modified to Phosphoserine. R140 carries the post-translational modification Citrulline. N6-acetyllysine is present on K191.

It belongs to the universal ribosomal protein uL13 family. Component of the 60S ribosome. Component of the GAIT complex. Interacts with EIF4G1. In terms of processing, phosphorylation at Ser-77 upon interferon-gamma treatment in macrophages involves a DAPK1-DAPK3 kinase cascade and is causing release from the ribosome, association with the GAIT complex and subsequent involvement in transcript-selective translation inhibition. Citrullinated by PADI4.

The protein localises to the cytoplasm. In terms of biological role, associated with ribosomes but is not required for canonical ribosome function and has extra-ribosomal functions. Component of the GAIT (gamma interferon-activated inhibitor of translation) complex which mediates interferon-gamma-induced transcript-selective translation inhibition in inflammation processes. Upon interferon-gamma activation and subsequent phosphorylation dissociates from the ribosome and assembles into the GAIT complex which binds to stem loop-containing GAIT elements in the 3'-UTR of diverse inflammatory mRNAs (such as ceruplasmin) and suppresses their translation. In the GAIT complex interacts with m7G cap-bound eIF4G at or near the eIF3-binding site and blocks the recruitment of the 43S ribosomal complex. Involved in methylation of rRNA. The sequence is that of Large ribosomal subunit protein uL13 (RPL13A) from Bos taurus (Bovine).